A 145-amino-acid polypeptide reads, in one-letter code: 3-hydroxyacyl-[acyl-carrier-protein] dehydratase FabZ (145 aa).

Residue H48 is part of the active site.

It belongs to the thioester dehydratase family. FabZ subfamily.

Its subcellular location is the cytoplasm. The catalysed reaction is a (3R)-hydroxyacyl-[ACP] = a (2E)-enoyl-[ACP] + H2O. In terms of biological role, involved in unsaturated fatty acids biosynthesis. Catalyzes the dehydration of short chain beta-hydroxyacyl-ACPs and long chain saturated and unsaturated beta-hydroxyacyl-ACPs. The protein is 3-hydroxyacyl-[acyl-carrier-protein] dehydratase FabZ of Geobacillus thermodenitrificans (strain NG80-2).